The following is a 152-amino-acid chain: uncharacterized protein (152 aa).

5 helical membrane passes run 2 to 22 (GVVFAFGFYLIFIKLTGLKLM), 33 to 53 (LKMIFSILSVILAFLINWLIM), 58 to 78 (FLIEIIHPIASVWIFIILIYL), 97 to 117 (FMGNMSAIAIFLELLKIIEYV), and 122 to 142 (IASPITVALVFFIPVVVFFNC).

The protein localises to the cell membrane. This is an uncharacterized protein from Methanocaldococcus jannaschii (strain ATCC 43067 / DSM 2661 / JAL-1 / JCM 10045 / NBRC 100440) (Methanococcus jannaschii).